Consider the following 324-residue polypeptide: 4-diphosphocytidyl-2-C-methyl-D-erythritol kinase (324 aa).

Residue Lys11 is part of the active site. 108–118 (PIGAGLAGGST) is a binding site for ATP. The active site involves Asp150.

Belongs to the GHMP kinase family. IspE subfamily.

It carries out the reaction 4-CDP-2-C-methyl-D-erythritol + ATP = 4-CDP-2-C-methyl-D-erythritol 2-phosphate + ADP + H(+). The protein operates within isoprenoid biosynthesis; isopentenyl diphosphate biosynthesis via DXP pathway; isopentenyl diphosphate from 1-deoxy-D-xylulose 5-phosphate: step 3/6. Functionally, catalyzes the phosphorylation of the position 2 hydroxy group of 4-diphosphocytidyl-2C-methyl-D-erythritol. The polypeptide is 4-diphosphocytidyl-2-C-methyl-D-erythritol kinase (Cyanothece sp. (strain PCC 7425 / ATCC 29141)).